A 389-amino-acid chain; its full sequence is Type 2 DNA topoisomerase 6 subunit A (389 aa).

In terms of domain architecture, Topo IIA-type catalytic spans 12–162 (EARRKAANIL…MLILSKEKGK (151 aa)). The O-(5'-phospho-DNA)-tyrosine intermediate role is filled by tyrosine 106. Glutamate 209 and aspartate 261 together coordinate Mg(2+).

This sequence belongs to the TOP6A family. As to quaternary structure, homodimer. Heterotetramer of two Top6A and two Top6B chains. Mg(2+) serves as cofactor.

The catalysed reaction is ATP-dependent breakage, passage and rejoining of double-stranded DNA.. Not inhibited by the DNA gyrase inhibitor novobiocin, instead inhibited by eukaryotic topoisomerase inhibitors such as m- and o-amsacrine, ellipticine, and the quinolone CP-115,953. Relaxes both positive and negative supercoils and exhibits a strong decatenase and unknotting activity; it cannot introduce DNA supercoils. ATP is absolutely required for DNA cleavage; the nonhydrolyzable analog AMP-PNP generates nicked or linear products from a supercoiled dsDNA substrate. Generates staggered two-nucleotide long 5' overhangs. The enzyme is covalently attached transiently to the 5'-ends of the cleaved strands. The sequence is that of Type 2 DNA topoisomerase 6 subunit A from Saccharolobus shibatae (strain ATCC 51178 / DSM 5389 / JCM 8931 / NBRC 15437 / B12) (Sulfolobus shibatae).